We begin with the raw amino-acid sequence, 521 residues long: Bacillolysin (521 aa).

Positions 1–27 (MGLGKKLSVAVAASFMSLTISLPGVQA) are cleaved as a signal peptide. Residues 28–221 (AENPQLKENL…ILKKQNKVEH (194 aa)) constitute a propeptide, activation peptide. 2 residues coordinate Ca(2+): glutamine 283 and aspartate 360. Histidine 364 serves as a coordination point for Zn(2+). Glutamate 365 is a catalytic residue. Residues histidine 368 and glutamate 388 each coordinate Zn(2+). Ca(2+) contacts are provided by aspartate 399, aspartate 402, aspartate 404, glutamate 407, and valine 411. Histidine 449 serves as the catalytic Proton donor.

Belongs to the peptidase M4 family. The cofactor is Ca(2+). Zn(2+) serves as cofactor.

The protein resides in the secreted. It carries out the reaction Similar, but not identical, to that of thermolysin.. Functionally, extracellular zinc metalloprotease. The sequence is that of Bacillolysin (npr) from Bacillus amyloliquefaciens (Bacillus velezensis).